The chain runs to 181 residues: Transcription termination/antitermination protein NusG (181 aa).

The region spanning 130-161 (PGEMVRVNDGPFADFNGVVEEVDYEKSRLKVS) is the KOW domain.

Belongs to the NusG family. In terms of assembly, monomer. Interacts with the transcription termination factor Rho and with RNA polymerase.

Functionally, participates in transcription elongation, termination and antitermination. In the absence of Rho, increases the rate of transcription elongation by the RNA polymerase (RNAP), probably by partially suppressing pausing. In the presence of Rho, modulates most Rho-dependent termination events by interacting with the RNAP to render the complex more susceptible to the termination activity of Rho. May be required to overcome a kinetic limitation of Rho to function at certain terminators. Also involved in ribosomal RNA transcriptional antitermination. The chain is Transcription termination/antitermination protein NusG from Salmonella typhi.